The primary structure comprises 100 residues: Urease subunit gamma (100 aa).

Belongs to the urease gamma subunit family. As to quaternary structure, heterotrimer of UreA (gamma), UreB (beta) and UreC (alpha) subunits. Three heterotrimers associate to form the active enzyme.

It is found in the cytoplasm. It catalyses the reaction urea + 2 H2O + H(+) = hydrogencarbonate + 2 NH4(+). It participates in nitrogen metabolism; urea degradation; CO(2) and NH(3) from urea (urease route): step 1/1. The chain is Urease subunit gamma from Burkholderia cenocepacia (strain ATCC BAA-245 / DSM 16553 / LMG 16656 / NCTC 13227 / J2315 / CF5610) (Burkholderia cepacia (strain J2315)).